The primary structure comprises 112 residues: Divalent-cation tolerance protein CutA (112 aa).

Cu cation-binding residues include Cys-16, His-83, and His-84.

It belongs to the CutA family. In terms of assembly, homotrimer. It depends on Cu cation as a cofactor.

The protein resides in the cytoplasm. In terms of biological role, involved in resistance toward heavy metals. In Escherichia coli O81 (strain ED1a), this protein is Divalent-cation tolerance protein CutA.